Here is a 97-residue protein sequence, read N- to C-terminus: Co-chaperonin GroES (97 aa).

The protein belongs to the GroES chaperonin family. As to quaternary structure, heptamer of 7 subunits arranged in a ring. Interacts with the chaperonin GroEL.

It localises to the cytoplasm. Together with the chaperonin GroEL, plays an essential role in assisting protein folding. The GroEL-GroES system forms a nano-cage that allows encapsulation of the non-native substrate proteins and provides a physical environment optimized to promote and accelerate protein folding. GroES binds to the apical surface of the GroEL ring, thereby capping the opening of the GroEL channel. This is Co-chaperonin GroES from Pseudomonas putida (Arthrobacter siderocapsulatus).